The primary structure comprises 151 residues: Large ribosomal subunit protein uL22 (151 aa).

It belongs to the universal ribosomal protein uL22 family. As to quaternary structure, part of the 50S ribosomal subunit.

Functionally, this protein binds specifically to 23S rRNA. It makes multiple contacts with different domains of the 23S rRNA in the assembled 50S subunit and ribosome. Its function is as follows. The globular domain of the protein is located near the polypeptide exit tunnel on the outside of the subunit, while an extended beta-hairpin is found that lines the wall of the exit tunnel in the center of the 70S ribosome. The sequence is that of Large ribosomal subunit protein uL22 from Thermoplasma acidophilum (strain ATCC 25905 / DSM 1728 / JCM 9062 / NBRC 15155 / AMRC-C165).